A 426-amino-acid chain; its full sequence is Probable glucose-6-phosphate isomerase (426 aa).

The active-site Proton donor is E272. Residues H293 and K404 contribute to the active site.

It belongs to the GPI family.

It localises to the cytoplasm. The enzyme catalyses alpha-D-glucose 6-phosphate = beta-D-fructose 6-phosphate. The protein operates within carbohydrate biosynthesis; gluconeogenesis. It participates in carbohydrate degradation; glycolysis; D-glyceraldehyde 3-phosphate and glycerone phosphate from D-glucose: step 2/4. In terms of biological role, catalyzes the reversible isomerization of glucose-6-phosphate to fructose-6-phosphate. This chain is Probable glucose-6-phosphate isomerase, found in Halobacterium salinarum (strain ATCC 700922 / JCM 11081 / NRC-1) (Halobacterium halobium).